The primary structure comprises 189 residues: Isopentenyl-diphosphate Delta-isomerase (189 aa).

The Mn(2+) site is built by His27 and His34. A Nudix hydrolase domain is found at 32-171 (PLHFAFSTYI…PFVFSPWMVD (140 aa)). Residue Cys69 is part of the active site. His71 contributes to the Mn(2+) binding site. Glu89 is a binding site for Mg(2+). 2 residues coordinate Mn(2+): Glu119 and Glu121. Residue Glu121 is part of the active site.

This sequence belongs to the IPP isomerase type 1 family. Requires Mg(2+) as cofactor. It depends on Mn(2+) as a cofactor.

It is found in the cytoplasm. The catalysed reaction is isopentenyl diphosphate = dimethylallyl diphosphate. It participates in isoprenoid biosynthesis; dimethylallyl diphosphate biosynthesis; dimethylallyl diphosphate from isopentenyl diphosphate: step 1/1. Its function is as follows. Catalyzes the 1,3-allylic rearrangement of the homoallylic substrate isopentenyl (IPP) to its highly electrophilic allylic isomer, dimethylallyl diphosphate (DMAPP). The sequence is that of Isopentenyl-diphosphate Delta-isomerase from Corynebacterium glutamicum (strain R).